The following is a 480-amino-acid chain: Uridine 5'-monophosphate synthase (480 aa).

Position 2 is an N-acetylalanine (Ala-2). The interval 2 to 214 is OPRTase; the sequence is AAADALLGSL…AFVAANPNDS (213 aa). A Phosphotyrosine modification is found at Tyr-37. Residue Ser-214 is modified to Phosphoserine. Positions 215 to 220 are domain linker; sequence LPSVKK. The tract at residues 221-480 is OMPdecase; sequence EPKELSFGAR…WEAYLSRLAV (260 aa). Orotidine 5'-phosphate is bound at residue Ser-257. UMP contacts are provided by residues Ser-257, Asp-259, and 281–283; that span reads KIH. Orotidine 5'-phosphate-binding positions include Lys-281, Lys-314, Asp-317, Thr-321, Ser-372, 430–432, and 450–451; these read QQY and GR. Active-site for OMPdecase activity residues include Lys-314 and Asp-317. UMP is bound by residues Asp-317, Thr-321, Ser-372, 430-432, and 450-451; these read QQY and GR.

This sequence in the N-terminal section; belongs to the purine/pyrimidine phosphoribosyltransferase family. The protein in the C-terminal section; belongs to the OMP decarboxylase family. As to quaternary structure, homodimer; dimerization is required for enzymatic activity.

The catalysed reaction is orotidine 5'-phosphate + diphosphate = orotate + 5-phospho-alpha-D-ribose 1-diphosphate. It carries out the reaction orotidine 5'-phosphate + H(+) = UMP + CO2. It participates in pyrimidine metabolism; UMP biosynthesis via de novo pathway; UMP from orotate: step 1/2. It functions in the pathway pyrimidine metabolism; UMP biosynthesis via de novo pathway; UMP from orotate: step 2/2. Its function is as follows. Bifunctional enzyme catalyzing the last two steps of de novo pyrimidine biosynthesis, orotate phosphoribosyltransferase (OPRT), which converts orotate to orotidine-5'-monophosphate (OMP), and orotidine-5'-monophosphate decarboxylase (ODC), the terminal enzymatic reaction that decarboxylates OMP to uridine monophosphate (UMP). The sequence is that of Uridine 5'-monophosphate synthase (UMPS) from Bos taurus (Bovine).